Reading from the N-terminus, the 249-residue chain is Type I iodothyronine deiodinase (249 aa).

Residues 1–12 lie on the Extracellular side of the membrane; sequence MGLPQPGLWLKR. The chain crosses the membrane as a helical; Signal-anchor for type III membrane protein span at residues 13–33; it reads LWVLLEVAVHVVVGKVLLILF. The Cytoplasmic segment spans residues 34–249; sequence PDRVKRNILA…VRAVLEKLHS (216 aa). Selenocysteine 126 is a catalytic residue. A non-standard amino acid (selenocysteine) is located at residue selenocysteine 126.

It belongs to the iodothyronine deiodinase family. Predominantly monomer. Can form homodimers but homodimerization is not essential for enzyme activity.

Its subcellular location is the cell membrane. The protein resides in the endoplasmic reticulum membrane. The protein localises to the basolateral cell membrane. It catalyses the reaction 3,3',5-triiodo-L-thyronine + iodide + A + H(+) = L-thyroxine + AH2. The enzyme catalyses 3,3',5'-triiodo-L-thyronine + iodide + A + H(+) = L-thyroxine + AH2. It carries out the reaction 3,3'-diiodo-L-thyronine + iodide + A + H(+) = 3,3',5'-triiodo-L-thyronine + AH2. The catalysed reaction is 3,3'-diiodo-L-thyronine + iodide + A + H(+) = 3,3',5-triiodo-L-thyronine + AH2. It catalyses the reaction 3'-iodo-L-thyronine + iodide + A + H(+) = 3',5'-diiodo-L-thyronine + AH2. The enzyme catalyses 3-iodo-L-thyronine + iodide + A + H(+) = 3,5-diiodo-L-thyronine + AH2. It carries out the reaction 3-iodo-L-thyronine + iodide + A + H(+) = 3,3'-diiodo-L-thyronine + AH2. The catalysed reaction is 3,3'-diiodothyronamine + iodide + A + H(+) = 3,3',5'-triiodothyronamine + AH2. It catalyses the reaction 3'-iodothyronamine + iodide + A + H(+) = 3',5'-diiodothyronamine + AH2. The enzyme catalyses 3-iodothyronamine + iodide + A + H(+) = 3,3'-diiodothyronamine + AH2. It carries out the reaction 3,3'-diiodothyronamine + iodide + A + H(+) = 3,3',5-triiodothyronamine + AH2. The catalysed reaction is 3-iodothyronamine + iodide + A + H(+) = 3,5-diiodothyronamine + AH2. It catalyses the reaction 3,3'-diiodo-L-thyronine sulfate + iodide + A + H(+) = 3,3',5'-triiodo-L-thyronine sulfate + AH2. The enzyme catalyses 3,3',5'-triiodo-L-thyronine sulfate + iodide + A + H(+) = L-thyroxine sulfate + AH2. It carries out the reaction 3,3'-diiodo-L-thyronine sulfate + iodide + A + H(+) = 3,3',5-triiodo-L-thyronine sulfate + AH2. Its activity is regulated as follows. Deiodination of substrates 3,3',5'-triiodothyronine, 3,3',5'-triiodothyronamine and 3',5'- diiodothyronamine are inhibited by 6n-propyl-2-thiouracil (PTU). In terms of biological role, plays a crucial role in the metabolism of thyroid hormones (TH) and has specific roles in TH activation and inactivation by deiodination. Catalyzes the deiodination of L-thyroxine (T4) to 3,5,3'-triiodothyronine (T3), 3,3',5'-triiodothyronine (rT3) to 3,3'-diiodothyronine (3,3'-T2) and 3',5'-diiodothyronine (3',5'-T2) to 3'-monoiodothyronine (3'-T1) via outer-ring deiodination (ORD). Catalyzes the deiodination of T4 to 3,3',5'-triiodothyronine (rT3) via inner-ring deiodination (IRD). Catalyzes the deiodination of T3 to 3,3'-T2, 3,5-diiodothyronine (3,5-T2) to 3- monoiodothyronine (3-T1) and 3,3'-T2 to 3-T1 via IRD. Catalyzes the phenolic ring deiodinations of 3,3',5'-triiodothyronamine and 3',5'-diiodothyronamine. Catalyzes the phenolic ring deiodination of 3,3'-diiodothyronamine and tyrosyl ring deiodinations of 3,5,3'-triiodothyronamine and 3,5-diiodothyronamine. Catalyzes the deiodination of L-thyroxine sulfate and 3,3',5-triiodo-L-thyronine sulfate via IRD and of 3,3',5'-triiodo-L-thyronine sulfate via ORD. This chain is Type I iodothyronine deiodinase (DIO1), found in Homo sapiens (Human).